The following is a 280-amino-acid chain: Pantothenate synthetase (280 aa).

31–38 (MGNLHAGH) serves as a coordination point for ATP. The active-site Proton donor is H38. Q62 lines the (R)-pantoate pocket. Q62 contacts beta-alanine. 150-153 (GKKD) is an ATP binding site. Q156 is a binding site for (R)-pantoate. ATP-binding positions include V179 and 187–190 (MSSR).

This sequence belongs to the pantothenate synthetase family. In terms of assembly, homodimer.

It is found in the cytoplasm. It carries out the reaction (R)-pantoate + beta-alanine + ATP = (R)-pantothenate + AMP + diphosphate + H(+). It participates in cofactor biosynthesis; (R)-pantothenate biosynthesis; (R)-pantothenate from (R)-pantoate and beta-alanine: step 1/1. In terms of biological role, catalyzes the condensation of pantoate with beta-alanine in an ATP-dependent reaction via a pantoyl-adenylate intermediate. The sequence is that of Pantothenate synthetase from Xanthomonas axonopodis pv. citri (strain 306).